Reading from the N-terminus, the 434-residue chain is Protein translocase subunit SecY (434 aa).

Helical transmembrane passes span 19–39 (LFTL…IPGI), 73–93 (IFML…LLVY), 117–137 (YLTI…AKGI), 148–168 (YIFV…WFGE), 179–199 (TSLI…FNLF), 209–229 (VNPV…ILII), 264–284 (VLPV…LSGF), 300–320 (PNGF…TYFY), 362–382 (FSGS…QNIF), and 391–411 (IMGG…LIHI).

The protein belongs to the SecY/SEC61-alpha family. As to quaternary structure, component of the Sec protein translocase complex. Heterotrimer consisting of SecY, SecE and SecG subunits. The heterotrimers can form oligomers, although 1 heterotrimer is thought to be able to translocate proteins. Interacts with the ribosome. Interacts with SecDF, and other proteins may be involved. Interacts with SecA.

Its subcellular location is the cell inner membrane. The central subunit of the protein translocation channel SecYEG. Consists of two halves formed by TMs 1-5 and 6-10. These two domains form a lateral gate at the front which open onto the bilayer between TMs 2 and 7, and are clamped together by SecE at the back. The channel is closed by both a pore ring composed of hydrophobic SecY resides and a short helix (helix 2A) on the extracellular side of the membrane which forms a plug. The plug probably moves laterally to allow the channel to open. The ring and the pore may move independently. The chain is Protein translocase subunit SecY from Borreliella burgdorferi (strain ATCC 35210 / DSM 4680 / CIP 102532 / B31) (Borrelia burgdorferi).